Here is a 212-residue protein sequence, read N- to C-terminus: ATP-dependent Clp protease proteolytic subunit (212 aa).

The Nucleophile role is filled by Ser106. Residue His131 is part of the active site.

The protein belongs to the peptidase S14 family. In terms of assembly, fourteen ClpP subunits assemble into 2 heptameric rings which stack back to back to give a disk-like structure with a central cavity, resembling the structure of eukaryotic proteasomes.

The protein resides in the cytoplasm. The enzyme catalyses Hydrolysis of proteins to small peptides in the presence of ATP and magnesium. alpha-casein is the usual test substrate. In the absence of ATP, only oligopeptides shorter than five residues are hydrolyzed (such as succinyl-Leu-Tyr-|-NHMec, and Leu-Tyr-Leu-|-Tyr-Trp, in which cleavage of the -Tyr-|-Leu- and -Tyr-|-Trp bonds also occurs).. Its function is as follows. Cleaves peptides in various proteins in a process that requires ATP hydrolysis. Has a chymotrypsin-like activity. Plays a major role in the degradation of misfolded proteins. The chain is ATP-dependent Clp protease proteolytic subunit from Rhodopseudomonas palustris (strain HaA2).